Consider the following 1067-residue polypeptide: Isoleucine--tRNA ligase (1067 aa).

The 'HIGH' region signature appears at 49–59; it reads PYVSGAIHLGT. The 'KMSKS' region motif lies at 625–629; it reads KMSKS. K628 contacts ATP.

Belongs to the class-I aminoacyl-tRNA synthetase family. IleS type 2 subfamily. Monomer. Requires Zn(2+) as cofactor.

It localises to the cytoplasm. The enzyme catalyses tRNA(Ile) + L-isoleucine + ATP = L-isoleucyl-tRNA(Ile) + AMP + diphosphate. Its function is as follows. Catalyzes the attachment of isoleucine to tRNA(Ile). As IleRS can inadvertently accommodate and process structurally similar amino acids such as valine, to avoid such errors it has two additional distinct tRNA(Ile)-dependent editing activities. One activity is designated as 'pretransfer' editing and involves the hydrolysis of activated Val-AMP. The other activity is designated 'posttransfer' editing and involves deacylation of mischarged Val-tRNA(Ile). In Pyrococcus abyssi (strain GE5 / Orsay), this protein is Isoleucine--tRNA ligase.